A 246-amino-acid polypeptide reads, in one-letter code: Putative F-box/LRR-repeat protein 9 (246 aa).

The F-box domain occupies 18–65 (YRNWAELPPELTSSILLRLGAIEILQNAQRVCKSWRRVCQDPSMWRKI).

This Arabidopsis thaliana (Mouse-ear cress) protein is Putative F-box/LRR-repeat protein 9 (FBL9).